The sequence spans 383 residues: GTP-binding protein 10 homolog (383 aa).

The Obg domain occupies 22 to 157; it reads PSFLDTLRLA…RIVNLDLKLI (136 aa). Residues 158-353 form the OBG-type G domain; it reads ADVGLVGFPN…VKSQLRRTLV (196 aa). Residues 164–171, 211–215, and 287–290 each bind GTP; these read GFPNAGKS, DLPGL, and NKMD.

This sequence belongs to the TRAFAC class OBG-HflX-like GTPase superfamily. OBG GTPase family.

It localises to the nucleus. It is found in the nucleolus. May be involved in the ribosome maturation process. This is GTP-binding protein 10 homolog from Drosophila pseudoobscura pseudoobscura (Fruit fly).